The sequence spans 408 residues: LL-diaminopimelate aminotransferase (408 aa).

Substrate-binding residues include Y15 and G42. Residues Y72, 108 to 109 (SK), Y132, N187, Y218, and 246 to 248 (SFS) each bind pyridoxal 5'-phosphate. Residues K109, Y132, and N187 each contribute to the substrate site. At K249 the chain carries N6-(pyridoxal phosphate)lysine. Pyridoxal 5'-phosphate-binding residues include R257 and N292. The substrate site is built by N292 and R388.

This sequence belongs to the class-I pyridoxal-phosphate-dependent aminotransferase family. LL-diaminopimelate aminotransferase subfamily. Homodimer. Pyridoxal 5'-phosphate serves as cofactor.

It carries out the reaction (2S,6S)-2,6-diaminopimelate + 2-oxoglutarate = (S)-2,3,4,5-tetrahydrodipicolinate + L-glutamate + H2O + H(+). The protein operates within amino-acid biosynthesis; L-lysine biosynthesis via DAP pathway; LL-2,6-diaminopimelate from (S)-tetrahydrodipicolinate (aminotransferase route): step 1/1. Functionally, involved in the synthesis of meso-diaminopimelate (m-DAP or DL-DAP), required for both lysine and peptidoglycan biosynthesis. Catalyzes the direct conversion of tetrahydrodipicolinate to LL-diaminopimelate. The chain is LL-diaminopimelate aminotransferase from Leptospira borgpetersenii serovar Hardjo-bovis (strain L550).